The following is a 413-amino-acid chain: DnaJ protein homolog (413 aa).

The 66-residue stretch at asparagine 10 to aspartate 75 folds into the J domain. A CR-type zinc finger spans residues glycine 133–lysine 217. CXXCXGXG motif repeat units lie at residues cysteine 146 to glycine 153, cysteine 162 to glycine 169, cysteine 189 to glycine 196, and cysteine 205 to lysine 212. The disordered stretch occupies residues arginine 387–glutamine 413. Cysteine methyl ester is present on cysteine 410. Cysteine 410 is lipidated: S-farnesyl cysteine. Residues alanine 411–glutamine 413 constitute a propeptide, removed in mature form.

As to expression, expressed in seedlings in all tissues, but exceedingly high levels in hypocotyledons and roots.

It is found in the cell membrane. Functionally, plays a continuous role in plant development probably in the structural organization of compartments. This Cucumis sativus (Cucumber) protein is DnaJ protein homolog (DNAJ1).